The chain runs to 231 residues: Fibronectin type III domain-containing protein 4 (231 aa).

Positions 1-40 (MPLAPPANSVETMASLMPLSPYLSPTVLLLVSCDLGFVRA) are cleaved as a signal peptide. Topologically, residues 41-163 (DRPPSPVNVT…GLDGERPLQT (123 aa)) are extracellular. One can recognise a Fibronectin type-III domain in the interval 43-136 (PPSPVNVTVT…PRVHFRTLKG (94 aa)). N-linked (GlcNAc...) asparagine glycans are attached at residues N48 and N143. A disordered region spans residues 118 to 156 (GLRGESPPGPRVHFRTLKGSDRLPSNSSSPGDITVEGLD). Residues 164-184 (GEVVIIVVVLLMWAAVIGLFC) form a helical membrane-spanning segment. Over 185–231 (RQYDIIKDNDSNNNPKEKGKGPEQSPQGRPVGTTRQKKSPSINTIDV) the chain is Cytoplasmic. Residues 193 to 205 (NDSNNNPKEKGKG) show a composition bias toward basic and acidic residues. Residues 193-231 (NDSNNNPKEKGKGPEQSPQGRPVGTTRQKKSPSINTIDV) are disordered.

Predominantly expressed in the liver and in the brain, including in the cortex, hypothalamus and hippocampus. Also expressed in heart, lung, kidney and testis. In the colon, expressed in the epithelium and in a subset of immune cells in lymphoid aggregates.

It is found in the membrane. It localises to the secreted. Its function is as follows. Has anti-inflammatory properties. In the colon, acts on macrophages to down-regulate inflammation. May suppress osteoclastogenesis and mature osteoclast resorptive function. In white adipose tissue, decreases local inflammation, via interaction with GPR116. Also required for proper systemic glucose tolerance, specifically sensitizing white adipocytes to insulin and promoting glucose uptake. The insulin sensitizing function in adipose tissue is mediated by interaction with ADGRF5/GPR116 and activation of cAMP signaling. The chain is Fibronectin type III domain-containing protein 4 (Fndc4) from Mus musculus (Mouse).